The chain runs to 209 residues: Uracil phosphoribosyltransferase (209 aa).

5-phospho-alpha-D-ribose 1-diphosphate is bound by residues R79, R104, and 131 to 139 (DPMLATGGS). Uracil-binding positions include V194 and 199 to 201 (GDA). D200 is a 5-phospho-alpha-D-ribose 1-diphosphate binding site.

The protein belongs to the UPRTase family. Mg(2+) serves as cofactor.

It catalyses the reaction UMP + diphosphate = 5-phospho-alpha-D-ribose 1-diphosphate + uracil. It functions in the pathway pyrimidine metabolism; UMP biosynthesis via salvage pathway; UMP from uracil: step 1/1. Its activity is regulated as follows. Allosterically activated by GTP. In terms of biological role, catalyzes the conversion of uracil and 5-phospho-alpha-D-ribose 1-diphosphate (PRPP) to UMP and diphosphate. This Bacillus cytotoxicus (strain DSM 22905 / CIP 110041 / 391-98 / NVH 391-98) protein is Uracil phosphoribosyltransferase.